We begin with the raw amino-acid sequence, 213 residues long: Probable RNA 2'-phosphotransferase (213 aa).

This sequence belongs to the KptA/TPT1 family.

Removes the 2'-phosphate from RNA via an intermediate in which the phosphate is ADP-ribosylated by NAD followed by a presumed transesterification to release the RNA and generate ADP-ribose 1''-2''-cyclic phosphate (APPR&gt;P). May function as an ADP-ribosylase. The polypeptide is Probable RNA 2'-phosphotransferase (Pyrobaculum aerophilum (strain ATCC 51768 / DSM 7523 / JCM 9630 / CIP 104966 / NBRC 100827 / IM2)).